A 241-amino-acid chain; its full sequence is Uracil-DNA glycosylase (241 aa).

Aspartate 68 (proton acceptor) is an active-site residue.

This sequence belongs to the uracil-DNA glycosylase (UDG) superfamily. UNG family.

The protein localises to the cytoplasm. It catalyses the reaction Hydrolyzes single-stranded DNA or mismatched double-stranded DNA and polynucleotides, releasing free uracil.. Excises uracil residues from the DNA which can arise as a result of misincorporation of dUMP residues by DNA polymerase or due to deamination of cytosine. The chain is Uracil-DNA glycosylase from Sinorhizobium medicae (strain WSM419) (Ensifer medicae).